Consider the following 562-residue polypeptide: MDDNKRPLYLPFAGPAILEAPLINKGSAFTDEERIFFNLEGLLPHVIETIEEQASRAYDQYKNFSNDLDKHIYLRNIQDTNETLYYRLVQNHITEMMPIIYTPTVGMACERFSKDYRRNRGLFISYANKDRIDDILNNSTRQKVKIIVVTDGERILGLGDQGIGGMGIPIGKLSLYTSCGGISPAYTLPITLDVGTDNPHLLEDPMYMGMRSPRIGGEEYTEFVEAFMQAVHRRWPDALIQFEDFAQKNAMPLLERYKDQYCCFNDDIQGTAAVTVGSLLAACKAAKTQLSEQRITFLGAGSAGCGIAEAIVAQMVSEGISEAQARKQVFMVDRWGMLQSNMPNLLPFQQKLAQNCDDITSWDNFSDNISLLDVVNNAKPTVLIGVSGAPGLFTEEIIKAMHSHCKRPIVFPLSNPTSRVEATPKDILHWTQGQALVATGSPFEPVVVDDVTYEIAQCNNSYIFPGIGLGVLASGAKRVSDAMLMASSRALAECSPLAIDGEGSLLPKLEDIHKVSKHIAFAVARTAIEEGHALPTTNELLTYAIEDNFWTAEYRSYKRTAF.

Tyr101 acts as the Proton donor in catalysis. Arg154 contacts NAD(+). Lys172 serves as the catalytic Proton acceptor. 3 residues coordinate a divalent metal cation: Glu243, Asp244, and Asp267. The NAD(+) site is built by Asp267 and Asn415.

This sequence belongs to the malic enzymes family. As to quaternary structure, homotetramer. The cofactor is Mg(2+). Mn(2+) is required as a cofactor.

The catalysed reaction is (S)-malate + NAD(+) = pyruvate + CO2 + NADH. It catalyses the reaction oxaloacetate + H(+) = pyruvate + CO2. In Shewanella pealeana (strain ATCC 700345 / ANG-SQ1), this protein is NAD-dependent malic enzyme.